Reading from the N-terminus, the 460-residue chain is WD repeat-containing protein 41 (460 aa).

6 WD repeats span residues Glu40–Glu79, Gly82–Arg128, Cys131–Thr168, Asp220–Cys258, Ala321–Ala359, and Gly403–Arg441.

Component of the C9orf72-SMCR8 complex, at least composed of C9orf72, SMCR8 and WDR41. The complex is formed of two protomers, each individually consisting of one molecule each of C9orf72, SMCR8 and WDR41. The protomers homodimerize via an interaction between C9orf72 (via C-terminus) and SMCR8 (via N-terminus). Within each protomer SMCR8 (via DENN domain) acts as a bridging protein between WDR41 (via C-terminus and N-terminus) and C9orf72 (via C-terminus). The C9orf72-SMCR8 complex associates with the ULK1/ATG1 kinase complex.

It localises to the cytoplasm. In terms of biological role, non-catalytic component of the C9orf72-SMCR8 complex, a complex that has guanine nucleotide exchange factor (GEF) activity and regulates autophagy. The C9orf72-SMCR8 complex promotes the exchange of GDP to GTP, converting inactive GDP-bound RAB8A and RAB39B into their active GTP-bound form, thereby promoting autophagosome maturation. As part of the C9orf72-SMCR8 complex, stimulates RAB8A and RAB11A GTPase activity in vitro, however WDR42 is shown not be an essential complex component for this function. The C9orf72-SMCR8 complex also acts as a negative regulator of autophagy initiation by interacting with the ULK1/ATG1 kinase complex and inhibiting its protein kinase activity. The sequence is that of WD repeat-containing protein 41 from Mus musculus (Mouse).